A 197-amino-acid chain; its full sequence is 22.7 kDa class IV heat shock protein (197 aa).

The N-terminal stretch at 1 to 28 is a signal peptide; the sequence is MSLKPLNMLLVPFLLLILAADFPLKAKA. Positions 68-184 constitute a sHSP domain; sequence PSITLSHARV…GPRMVSIVEE (117 aa). The Prevents secretion from ER signature appears at 194-197; it reads DELK.

The protein belongs to the small heat shock protein (HSP20) family. In terms of assembly, forms oligomeric structures.

The protein localises to the endoplasmic reticulum lumen. This is 22.7 kDa class IV heat shock protein (HSP22.7) from Pisum sativum (Garden pea).